A 685-amino-acid chain; its full sequence is Twinkle mtDNA helicase (685 aa).

A mitochondrion-targeting transit peptide spans 1–31 (MWLLLRRAYPLRILLPLRGEWVGRRGLPRSL). Positions 1 to 122 (MWLLLRRAYP…LCMTSLAEGS (122 aa)) are contributes to single strand DNA binding activity. The tract at residues 54-214 (PVTTTEIRQY…LVFPWFTPGS (161 aa)) is N-terminal region (NTR). The interval 122–373 (SWEDLQASVE…WHKSIVSFRQ (252 aa)) is required for hexamers formation and DNA helicase activity. The segment at 215 to 335 (SGLRGLKLLG…LNPKRCSLVR (121 aa)) is primase-like domain. Positions 385 to 636 (VEQAAGVRWS…LTFSIPPKSK (252 aa)) constitute an SF4 helicase domain. The interval 406–591 (HRKGELTVFT…QEADNVLILQ (186 aa)) is maybe required for stable oligomeric structure. 416–423 (GPTGSGKT) provides a ligand contact to ATP. A coiled-coil region spans residues 454–482 (RVMLTQFAVTRLEEQLDKYEEWADRFEDL). The tract at residues 641–685 (KIKDDNGLVAKKSSSGKKGAAHQNPEICLGQDPSPAQPDTSKSSG) is might negatively regulate ATPase activity. The interval 642-685 (IKDDNGLVAKKSSSGKKGAAHQNPEICLGQDPSPAQPDTSKSSG) is disordered.

As to quaternary structure, homohexamer (via C-terminus), which assembles in a ring-like structure. Homoheptamer, which assembles in a ring-like structure. Homooctamer, which assembles in a ring-like structure. Oligomers may sequentially eject two monomers (octamer&gt;heptamer&gt;hexamer) upon DNA binding. Oligomerization is Mg(2+), nucleotide and DNA-independent, however, Mg(2+) and nucleotide stabilize the homohexameric form. Interacts with POLG in vitro. Interacts with LONP1. As to expression, ubiquitous with the highest levels in the liver, heart and kidneys. The skeletal muscle, brain and testis showed lower but detectable expression. Expression is coregulated with MRPL43.

It is found in the mitochondrion matrix. It localises to the mitochondrion nucleoid. The protein resides in the mitochondrion inner membrane. The catalysed reaction is ATP + H2O = ADP + phosphate + H(+). It catalyses the reaction Couples ATP hydrolysis with the unwinding of duplex DNA at the replication fork by translocating in the 5'-3' direction. This creates two antiparallel DNA single strands (ssDNA). The leading ssDNA polymer is the template for DNA polymerase III holoenzyme which synthesizes a continuous strand.. Functionally, mitochondrial helicase involved in mtDNA replication and repair. Might have a role in mtDNA repair. Has DNA strand separation activity needed to form a processive replication fork for leading strand synthesis which is catalyzed by the formation of a replisome complex with POLG and mtSDB. Preferentially unwinds DNA substrates with pre-existing 5'-and 3'- single-stranded tails but is also active on a 5'- flap substrate. Can dissociate the invading strand of immobile or mobile D-loop DNA structures irrespective of the single strand polarity of the third strand. In addition to its DNA strand separation activity, also has DNA strand annealing, DNA strand-exchange and DNA branch migration activities. The chain is Twinkle mtDNA helicase from Mus musculus (Mouse).